The sequence spans 208 residues: Proteasome subunit beta 2 (208 aa).

Positions 1–9 (MSGKKIVSK) are cleaved as a propeptide — removed in mature form; by autocatalysis. Thr10 (nucleophile) is an active-site residue.

This sequence belongs to the peptidase T1B family. The 20S proteasome core is composed of 14 alpha and 14 beta subunits that assemble into four stacked heptameric rings, resulting in a barrel-shaped structure. The two inner rings, each composed of seven catalytic beta subunits, are sandwiched by two outer rings, each composed of seven alpha subunits. The catalytic chamber with the active sites is on the inside of the barrel. Has a gated structure, the ends of the cylinder being occluded by the N-termini of the alpha-subunits. Is capped at one or both ends by the proteasome regulatory ATPase, PAN.

It is found in the cytoplasm. It catalyses the reaction Cleavage of peptide bonds with very broad specificity.. Its activity is regulated as follows. The formation of the proteasomal ATPase PAN-20S proteasome complex, via the docking of the C-termini of PAN into the intersubunit pockets in the alpha-rings, triggers opening of the gate for substrate entry. Interconversion between the open-gate and close-gate conformations leads to a dynamic regulation of the 20S proteasome proteolysis activity. Component of the proteasome core, a large protease complex with broad specificity involved in protein degradation. This is Proteasome subunit beta 2 from Staphylothermus marinus (strain ATCC 43588 / DSM 3639 / JCM 9404 / F1).